The sequence spans 570 residues: MGVKTFTHSSSSHSQEMLGKLNMLRNDGHFCDITIRVQDKIFRAHKVVLAACSDFFRTKLVGQAEDENKNVLDLHHVTVTGFIPLLEYAYTATLSINTENIIDVLAAASYMQMFSVASTCSEFMKSSILWNTPNSQPEKGLDAGQENNSNCNFTSRDGSISPVSSECSVVERTIPVCRESRRKRKSYIVMSPESPVKCGTQTSSPQVLNSSASYSENRNQPVDSSLAFPWTFPFGIDRRIQPEKVKQAENTRTLELPGPSETGRRMADYVTCESTKTTLPLGTEEDVRVKVERLSDEEVHEEVSQPVSASQSSLSDQQTVPGSEQVQEDLLISPQSSSIGSVDEGVSEGLPTLQSTSSTNAPPDDDDRLENVQYPYQLYIAPSTSSTERPSPNGPDRPFQCPTCGVRFTRIQNLKQHMLIHSGIKPFQCDRCGKKFTRAYSLKMHRLKHEGKRCFRCQICSATFTSFGEYKHHMRVSRHIIRKPRIYECKTCGAMFTNSGNLIVHLRSLNHEASELANYFQSSDFLVPDYLNQEQEETLVQYDLGEHGFESNSSVQMPVISQYHSKGKEP.

Lys4 participates in a covalent cross-link: Glycyl lysine isopeptide (Lys-Gly) (interchain with G-Cter in SUMO2). In terms of domain architecture, BTB spans 31-98 (CDITIRVQDK…AYTATLSINT (68 aa)). 6 positions are modified to phosphoserine: Ser135, Ser159, Ser161, Ser165, Ser191, and Ser194. 2 disordered regions span residues 194–220 (SPVK…NRNQ) and 243–267 (EKVK…RRMA). Polar residues predominate over residues 199-220 (GTQTSSPQVLNSSASYSENRNQ). Thr200 carries the phosphothreonine modification. Lys290 is covalently cross-linked (Glycyl lysine isopeptide (Lys-Gly) (interchain with G-Cter in SUMO2)). The disordered stretch occupies residues 295-369 (SDEEVHEEVS…NAPPDDDDRL (75 aa)). Over residues 304–318 (SQPVSASQSSLSDQQ) the composition is skewed to low complexity. Polar residues predominate over residues 352–361 (TLQSTSSTNA). 4 consecutive C2H2-type zinc fingers follow at residues 399 to 421 (FQCP…MLIH), 427 to 449 (FQCD…RLKH), 455 to 479 (FRCQ…VSRH), and 487 to 511 (YECK…SLNH).

Its subcellular location is the nucleus. Functionally, may be involved in transcriptional regulation. The protein is Zinc finger and BTB domain-containing protein 44 (ZBTB44) of Homo sapiens (Human).